An 838-amino-acid chain; its full sequence is V-type proton ATPase 116 kDa subunit a 1 (838 aa).

At Met-1–Glu-388 the chain is on the cytoplasmic side. Phosphothreonine occurs at positions 250 and 360. Tyr-364 bears the Phosphotyrosine mark. A helical transmembrane segment spans residues Ile-389–Phe-407. Over Gly-408–Asp-409 the chain is Vacuolar. The chain crosses the membrane as a helical span at residues Leu-410–Lys-426. The Cytoplasmic segment spans residues Glu-427 to Ser-441. Residues Thr-442–Ser-471 form a helical membrane-spanning segment. Residues Leu-472 to Ser-535 lie on the Vacuolar side of the membrane. The helical transmembrane segment at Phe-536–Leu-555 threads the bilayer. Over Ser-556–Phe-573 the chain is Cytoplasmic. The helical transmembrane segment at Ile-574–Lys-594 threads the bilayer. At Trp-595–Phe-639 the chain is on the vacuolar side. The helical transmembrane segment at Leu-640–Leu-659 threads the bilayer. Residues Arg-660–Thr-725 are Cytoplasmic-facing. The chain crosses the membrane as a helical span at residues Ile-726–Ala-750. Residues Gln-751–Ala-771 are Vacuolar-facing. The helical transmembrane segment at Gly-772–Glu-810 threads the bilayer. Residues Phe-811–Asp-838 lie on the Cytoplasmic side of the membrane.

The protein belongs to the V-ATPase 116 kDa subunit family. As to quaternary structure, V-ATPase is a heteromultimeric enzyme made up of two complexes: the ATP-hydrolytic V1 complex and the proton translocation V0 complex. The V1 complex consists of three catalytic AB heterodimers that form a heterohexamer, three peripheral stalks each consisting of EG heterodimers, one central rotor including subunits D and F, and the regulatory subunits C and H. The proton translocation complex V0 consists of the proton transport subunit a, a ring of proteolipid subunits c9c'', rotary subunit d, subunits e and f, and the accessory subunits ATP6AP1/Ac45 and ATP6AP2/PRR. Interacts with SPAAR. As to expression, expressed in brain (at protein level). In terms of tissue distribution, expressed heart, kidney, liver, spleen, and to a lesser extent in brain.

It is found in the cytoplasmic vesicle. Its subcellular location is the clathrin-coated vesicle membrane. It localises to the secretory vesicle. The protein localises to the synaptic vesicle membrane. The protein resides in the melanosome. In terms of biological role, subunit of the V0 complex of vacuolar(H+)-ATPase (V-ATPase), a multisubunit enzyme composed of a peripheral complex (V1) that hydrolyzes ATP and a membrane integral complex (V0) that translocates protons. V-ATPase is responsible for the acidification of various organelles, such as lysosomes, endosomes, the trans-Golgi network, and secretory granules, including synaptic vesicles. In certain cell types, can be exported to the plasma membrane, where it is involved in the acidification of the extracellular environment. Required for assembly and activity of the vacuolar ATPase. Through its action on compartment acidification, plays an essential role in neuronal development in terms of integrity and connectivity of neurons. The sequence is that of V-type proton ATPase 116 kDa subunit a 1 (ATP6V0A1) from Bos taurus (Bovine).